The following is a 438-amino-acid chain: Rhomboid-related protein 1 (438 aa).

Positions 1–62 (MGRVEDGGTT…PSQPGPALWS (62 aa)) are disordered. A compositionally biased stretch (acidic residues) spans 8–17 (GTTEELEDWD). Helical transmembrane passes span 196-216 (PPVFMASVTLAQIIVFLCYGA), 262-282 (GFNALLQLMIGVPLEMVHGLL), 284-304 (ISLLYLAGVLAGSLTVSITDM), 308-328 (VVGGSGGVYALCSAHLANVVM), 340-359 (LRMVLALVCMSSEVGRAVWL), 372-392 (PSFMAHLAGAVVGVSMGLTIL), and 405-425 (WWVVLLAYGTFLLFAVFWNVF). S312 functions as the Nucleophile in the catalytic mechanism. H377 is a catalytic residue.

This sequence belongs to the peptidase S54 family. Detected in heart, brain, skeletal muscle and kidney.

It is found in the membrane. The enzyme catalyses Cleaves type-1 transmembrane domains using a catalytic dyad composed of serine and histidine that are contributed by different transmembrane domains.. Its function is as follows. May be involved in regulated intramembrane proteolysis and the subsequent release of functional polypeptides from their membrane anchors. The polypeptide is Rhomboid-related protein 1 (RHBDL1) (Homo sapiens (Human)).